Consider the following 449-residue polypeptide: UDP-N-acetylmuramoylalanine--D-glutamate ligase (449 aa).

ATP is bound at residue 118 to 124; that stretch reads GTNGKTT.

Belongs to the MurCDEF family.

It localises to the cytoplasm. The catalysed reaction is UDP-N-acetyl-alpha-D-muramoyl-L-alanine + D-glutamate + ATP = UDP-N-acetyl-alpha-D-muramoyl-L-alanyl-D-glutamate + ADP + phosphate + H(+). Its pathway is cell wall biogenesis; peptidoglycan biosynthesis. Functionally, cell wall formation. Catalyzes the addition of glutamate to the nucleotide precursor UDP-N-acetylmuramoyl-L-alanine (UMA). The sequence is that of UDP-N-acetylmuramoylalanine--D-glutamate ligase from Staphylococcus epidermidis (strain ATCC 35984 / DSM 28319 / BCRC 17069 / CCUG 31568 / BM 3577 / RP62A).